A 116-amino-acid chain; its full sequence is NADH-ubiquinone oxidoreductase chain 3 (116 aa).

3 consecutive transmembrane segments (helical) span residues 3–23 (LFAT…LVSF), 56–76 (FFLV…LLPL), and 88–108 (TLFW…YEWA).

The protein belongs to the complex I subunit 3 family. As to quaternary structure, core subunit of respiratory chain NADH dehydrogenase (Complex I) which is composed of 45 different subunits.

It localises to the mitochondrion inner membrane. The catalysed reaction is a ubiquinone + NADH + 5 H(+)(in) = a ubiquinol + NAD(+) + 4 H(+)(out). Its function is as follows. Core subunit of the mitochondrial membrane respiratory chain NADH dehydrogenase (Complex I) which catalyzes electron transfer from NADH through the respiratory chain, using ubiquinone as an electron acceptor. Essential for the catalytic activity of complex I. In Danio rerio (Zebrafish), this protein is NADH-ubiquinone oxidoreductase chain 3 (mt-nd3).